Reading from the N-terminus, the 239-residue chain is Geranylgeranylglyceryl phosphate synthase (239 aa).

Positions 18 and 45 each coordinate Mg(2+). Sn-glycerol 1-phosphate contacts are provided by residues 166-172, 197-198, and 219-220; these read YLEAGSG, GG, and GT.

It belongs to the GGGP/HepGP synthase family. Group II subfamily. Mg(2+) is required as a cofactor.

The protein resides in the cytoplasm. The catalysed reaction is sn-glycerol 1-phosphate + (2E,6E,10E)-geranylgeranyl diphosphate = sn-3-O-(geranylgeranyl)glycerol 1-phosphate + diphosphate. It participates in membrane lipid metabolism; glycerophospholipid metabolism. In terms of biological role, prenyltransferase that catalyzes the transfer of the geranylgeranyl moiety of geranylgeranyl diphosphate (GGPP) to the C3 hydroxyl of sn-glycerol-1-phosphate (G1P). This reaction is the first ether-bond-formation step in the biosynthesis of archaeal membrane lipids. In Pyrobaculum aerophilum (strain ATCC 51768 / DSM 7523 / JCM 9630 / CIP 104966 / NBRC 100827 / IM2), this protein is Geranylgeranylglyceryl phosphate synthase.